We begin with the raw amino-acid sequence, 71 residues long: MKSMDKLTTGVAYGTSAGNAGFWALQLLDKVTPSQWAAIGVLGSLVFGLLTYLTNLYFKIKEDRRKAARGE.

This sequence belongs to the lambda phage S protein family.

This is Prophage lysis protein S homolog EssQ (essQ) from Escherichia coli (strain K12).